The sequence spans 785 residues: Phenylalanine--tRNA ligase beta subunit (785 aa).

A tRNA-binding domain is found at 38-150 (CEHLKTFVIA…NTYNVGDTFF (113 aa)). The region spanning 394-470 (VDNIELNFFP…RLYGYDKICE (77 aa)) is the B5 domain. 4 residues coordinate Mg(2+): Asp448, Asp454, Glu457, and Glu458. An FDX-ACB domain is found at 690–783 (SCYQSVKRDF…VAEKLGGVLR (94 aa)).

This sequence belongs to the phenylalanyl-tRNA synthetase beta subunit family. Type 1 subfamily. As to quaternary structure, tetramer of two alpha and two beta subunits. Mg(2+) serves as cofactor.

The protein localises to the cytoplasm. The catalysed reaction is tRNA(Phe) + L-phenylalanine + ATP = L-phenylalanyl-tRNA(Phe) + AMP + diphosphate + H(+). This chain is Phenylalanine--tRNA ligase beta subunit, found in Ehrlichia canis (strain Jake).